The sequence spans 354 residues: Ferrochelatase (354 aa).

H204 and E306 together coordinate Fe cation.

The protein belongs to the ferrochelatase family.

Its subcellular location is the cytoplasm. The enzyme catalyses heme b + 2 H(+) = protoporphyrin IX + Fe(2+). Its pathway is porphyrin-containing compound metabolism; protoheme biosynthesis; protoheme from protoporphyrin-IX: step 1/1. Functionally, catalyzes the ferrous insertion into protoporphyrin IX. This Coxiella burnetii (strain Dugway 5J108-111) protein is Ferrochelatase.